A 562-amino-acid polypeptide reads, in one-letter code: NAD-dependent malic enzyme (562 aa).

Tyr101 serves as the catalytic Proton donor. Arg154 serves as a coordination point for NAD(+). The Proton acceptor role is filled by Lys172. Glu243, Asp244, and Asp267 together coordinate a divalent metal cation. Residues Asp267 and Asn415 each coordinate NAD(+).

It belongs to the malic enzymes family. In terms of assembly, homotetramer. The cofactor is Mg(2+). It depends on Mn(2+) as a cofactor.

The catalysed reaction is (S)-malate + NAD(+) = pyruvate + CO2 + NADH. It catalyses the reaction oxaloacetate + H(+) = pyruvate + CO2. The sequence is that of NAD-dependent malic enzyme from Shewanella frigidimarina (strain NCIMB 400).